The following is a 467-amino-acid chain: Retinoic acid receptor RXR-gamma (467 aa).

A modulating region spans residues 1-142 (MYGNYPHFIK…TSPGSLAKHI (142 aa)). 2 consecutive NR C4-type zinc fingers follow at residues 143–163 (CAIC…CEGC) and 179–203 (CRDN…YQKC). A DNA-binding region (nuclear receptor) is located at residues 143–208 (CAICGDRSSG…RYQKCLAMGM (66 aa)). The segment at 209–232 (KREAVQEERQGSRERSENEAESTS) is hinge. The span at 214–226 (QEERQGSRERSEN) shows a compositional bias: basic and acidic residues. The tract at residues 214 to 237 (QEERQGSRERSENEAESTSGGSED) is disordered. In terms of domain architecture, NR LBD spans 235-463 (SEDMPVERIL…TFLMEMLETP (229 aa)).

Belongs to the nuclear hormone receptor family. NR2 subfamily. In terms of assembly, homodimer. Heterodimer; with a RAR molecule. Binds DNA preferentially as a RAR/RXR heterodimer. In terms of tissue distribution, isoform 1 is highly expressed inliver. Isoform 2 is abundantly expressed in eye and dorsal root ganglia.

It is found in the nucleus. Its function is as follows. Receptor for retinoic acid. Retinoic acid receptors bind as heterodimers to their target response elements in response to their ligands, all-trans or 9-cis retinoic acid, and regulate gene expression in various biological processes. The RAR/RXR heterodimers bind to the retinoic acid response elements (RARE) composed of tandem 5'-AGGTCA-3' sites known as DR1-DR5. The high affinity ligand for RXRs is 9-cis retinoic acid. This is Retinoic acid receptor RXR-gamma (RXRG) from Gallus gallus (Chicken).